Here is a 430-residue protein sequence, read N- to C-terminus: Serine--tRNA ligase (430 aa).

The disordered stretch occupies residues 44–65 (TESLQAERNSRSKSIGAAKARG). L-serine is bound at residue 237–239 (TAE). Position 268–270 (268–270 (RSE)) interacts with ATP. E291 lines the L-serine pocket. 355-358 (EISS) contacts ATP. S391 serves as a coordination point for L-serine.

Belongs to the class-II aminoacyl-tRNA synthetase family. Type-1 seryl-tRNA synthetase subfamily. In terms of assembly, homodimer. The tRNA molecule binds across the dimer.

It localises to the cytoplasm. It carries out the reaction tRNA(Ser) + L-serine + ATP = L-seryl-tRNA(Ser) + AMP + diphosphate + H(+). The enzyme catalyses tRNA(Sec) + L-serine + ATP = L-seryl-tRNA(Sec) + AMP + diphosphate + H(+). Its pathway is aminoacyl-tRNA biosynthesis; selenocysteinyl-tRNA(Sec) biosynthesis; L-seryl-tRNA(Sec) from L-serine and tRNA(Sec): step 1/1. Catalyzes the attachment of serine to tRNA(Ser). Is also able to aminoacylate tRNA(Sec) with serine, to form the misacylated tRNA L-seryl-tRNA(Sec), which will be further converted into selenocysteinyl-tRNA(Sec). The sequence is that of Serine--tRNA ligase from Edwardsiella ictaluri (strain 93-146).